Here is a 177-residue protein sequence, read N- to C-terminus: Isopentenyl-diphosphate Delta-isomerase (177 aa).

Residues H22 and H28 each contribute to the Mn(2+) site. The region spanning 26 to 160 (LRHMAISVFV…PERFTPWLRI (135 aa)) is the Nudix hydrolase domain. C62 is an active-site residue. Residue H64 coordinates Mn(2+). Residue E82 coordinates Mg(2+). Residues E108 and E110 each coordinate Mn(2+). E110 is an active-site residue.

Belongs to the IPP isomerase type 1 family. Mg(2+) is required as a cofactor. Requires Mn(2+) as cofactor.

It localises to the cytoplasm. The enzyme catalyses isopentenyl diphosphate = dimethylallyl diphosphate. It participates in isoprenoid biosynthesis; dimethylallyl diphosphate biosynthesis; dimethylallyl diphosphate from isopentenyl diphosphate: step 1/1. It functions in the pathway porphyrin-containing compound metabolism; chlorophyll biosynthesis. Catalyzes the 1,3-allylic rearrangement of the homoallylic substrate isopentenyl (IPP) to its highly electrophilic allylic isomer, dimethylallyl diphosphate (DMAPP). The chain is Isopentenyl-diphosphate Delta-isomerase from Cereibacter sphaeroides (strain ATCC 17029 / ATH 2.4.9) (Rhodobacter sphaeroides).